A 266-amino-acid polypeptide reads, in one-letter code: GATA-type zinc finger protein 1 (266 aa).

Disordered stretches follow at residues 1–31, 106–129, and 171–191; these read MEAA…KSRP, TQCP…PRKQ, and CSQK…SSEA. The span at 106 to 121 shows a compositional bias: polar residues; that stretch reads TQCPNLEISSATSPAS. The GATA-type zinc-finger motif lies at 197–221; that stretch reads CASCRTQRTPLWRDAEDGTPLCNAC.

As to expression, specifically expressed in adult testis and ovary. Expressed at high levels in the somatic cells of the developing gonads, including Leydig cells in the testes and granulosa cells in the ovaries.

It localises to the nucleus. Transcriptional regulator that plays a key role in germ cell development. Determines the oogenic fate by activating key genes for the oogenic program and meiotic prophase entry. Acts downstream of bone morphogenetic protein (BMP) by regulating expression of genes required for the oogenic programs, which are repressed by Polycomb activities in sexually uncommitted germ cells. Regulates expression of STRA8, a central downstream effector for the meiotic program. Acts independently of retinoic acid (RA). In males, not required for germ-cell sex determination, but required to allow the spermatogonia to efficiently accomplish the meiotic prophase. The polypeptide is GATA-type zinc finger protein 1 (Mus musculus (Mouse)).